The primary structure comprises 504 residues: ATP synthase subunit alpha (504 aa).

Residue 169–176 (GDRQTGKT) coordinates ATP.

The protein belongs to the ATPase alpha/beta chains family. As to quaternary structure, F-type ATPases have 2 components, CF(1) - the catalytic core - and CF(0) - the membrane proton channel. CF(1) has five subunits: alpha(3), beta(3), gamma(1), delta(1), epsilon(1). CF(0) has three main subunits: a(1), b(2) and c(9-12). The alpha and beta chains form an alternating ring which encloses part of the gamma chain. CF(1) is attached to CF(0) by a central stalk formed by the gamma and epsilon chains, while a peripheral stalk is formed by the delta and b chains.

It is found in the cell membrane. The catalysed reaction is ATP + H2O + 4 H(+)(in) = ADP + phosphate + 5 H(+)(out). Its function is as follows. Produces ATP from ADP in the presence of a proton gradient across the membrane. The alpha chain is a regulatory subunit. This is ATP synthase subunit alpha from Clostridium botulinum (strain ATCC 19397 / Type A).